A 293-amino-acid chain; its full sequence is Movement protein BC1 (293 aa).

The protein belongs to the begomovirus movement protein BC1 family. As to quaternary structure, binds to dimeric supercoiled plasmid DNA. Phosphorylated.

It localises to the host cell membrane. It is found in the host microsome membrane. Its subcellular location is the host endoplasmic reticulum membrane. Its function is as follows. Transports viral genome to neighboring plant cells directly through plasmosdesmata, without any budding. The movement protein allows efficient cell to cell propagation, by bypassing the host cell wall barrier. Begomovirus genome is shuttled out of nucleus by Nuclear shuttle protein (NSP) and the movement protein transports the DNA-NSP complex to cell plasmodesmata and facilitates further movement across the cell wall. The polypeptide is Movement protein BC1 (Macroptilium lathyroides (Lima bean)).